The following is a 252-amino-acid chain: Glycerol-3-phosphate acyltransferase (252 aa).

The next 6 membrane-spanning stretches (helical) occupy residues 6 to 26 (SVAM…YLIG), 66 to 86 (ILTL…TYII), 104 to 124 (AILV…PIFF), 140 to 160 (ITID…ILLI), 164 to 184 (MSLS…IPGI), and 204 to 224 (VIKG…ILIY).

The protein belongs to the PlsY family. As to quaternary structure, probably interacts with PlsX.

It is found in the cell membrane. The catalysed reaction is an acyl phosphate + sn-glycerol 3-phosphate = a 1-acyl-sn-glycero-3-phosphate + phosphate. It participates in lipid metabolism; phospholipid metabolism. Catalyzes the transfer of an acyl group from acyl-phosphate (acyl-PO(4)) to glycerol-3-phosphate (G3P) to form lysophosphatidic acid (LPA). This enzyme utilizes acyl-phosphate as fatty acyl donor, but not acyl-CoA or acyl-ACP. This chain is Glycerol-3-phosphate acyltransferase, found in Ureaplasma urealyticum serovar 10 (strain ATCC 33699 / Western).